The sequence spans 316 residues: Probable cell division protein WhiA (316 aa).

The H-T-H motif DNA-binding region spans 275-309; that stretch reads TLKELGEMVSSGKISKSGINHRLRKLDEIAEQLRS.

This sequence belongs to the WhiA family.

In terms of biological role, involved in cell division and chromosome segregation. This chain is Probable cell division protein WhiA, found in Bacillus licheniformis (strain ATCC 14580 / DSM 13 / JCM 2505 / CCUG 7422 / NBRC 12200 / NCIMB 9375 / NCTC 10341 / NRRL NRS-1264 / Gibson 46).